A 382-amino-acid chain; its full sequence is Succinate--CoA ligase [ADP-forming] subunit beta (382 aa).

The 229-residue stretch at 9 to 237 (KQVFADAGIP…AAEGDELEQK (229 aa)) folds into the ATP-grasp domain. Residues lysine 45, 52–54 (GRG), glutamate 91, valine 94, and glutamate 99 each bind ATP. Asparagine 191 and aspartate 205 together coordinate Mg(2+). Residues asparagine 257 and 314-316 (GIT) contribute to the substrate site.

The protein belongs to the succinate/malate CoA ligase beta subunit family. As to quaternary structure, heterotetramer of two alpha and two beta subunits. Mg(2+) serves as cofactor.

The catalysed reaction is succinate + ATP + CoA = succinyl-CoA + ADP + phosphate. It carries out the reaction GTP + succinate + CoA = succinyl-CoA + GDP + phosphate. The protein operates within carbohydrate metabolism; tricarboxylic acid cycle; succinate from succinyl-CoA (ligase route): step 1/1. In terms of biological role, succinyl-CoA synthetase functions in the citric acid cycle (TCA), coupling the hydrolysis of succinyl-CoA to the synthesis of either ATP or GTP and thus represents the only step of substrate-level phosphorylation in the TCA. The beta subunit provides nucleotide specificity of the enzyme and binds the substrate succinate, while the binding sites for coenzyme A and phosphate are found in the alpha subunit. The protein is Succinate--CoA ligase [ADP-forming] subunit beta of Haloarcula marismortui (strain ATCC 43049 / DSM 3752 / JCM 8966 / VKM B-1809) (Halobacterium marismortui).